A 502-amino-acid polypeptide reads, in one-letter code: Dipeptide and tripeptide permease A (502 aa).

The Cytoplasmic portion of the chain corresponds to 1–35 (MSTANNKPTDESVSLNAFKQPKAFYLIFSIELWER). A helical transmembrane segment spans residues 36-56 (FGFYGLQGIMAVYLVKQLGMS). Over 57–60 (EADS) the chain is Periplasmic. The helical transmembrane segment at 61-81 (ITLFSSFSALVYGLVAVGGWL) threads the bilayer. Topologically, residues 82-90 (GDKVLGTKR) are cytoplasmic. The helical transmembrane segment at 91 to 111 (VIMLGAVVLAIGYGLVAWSGH) threads the bilayer. A topological domain (periplasmic) is located at residue Asp-112. The helical transmembrane segment at 113-133 (AAVVYMGMATIAVGNGLFKAN) threads the bilayer. The Cytoplasmic segment spans residues 134-154 (PSSLLSTCYNKDDPRLDGAFT). A helical transmembrane segment spans residues 155 to 175 (MYYMSINIGSFFSMLATPWLA). Over 176–179 (AKFG) the chain is Periplasmic. A helical transmembrane segment spans residues 180–200 (WSVAFALSFVGMLITVVNFLF). At 201 to 218 (CRSWVKNYGSKPDFEPVH) the chain is on the cytoplasmic side. A helical membrane pass occupies residues 219-239 (IGKLLATIVGVVILATIATWL). Over 240 to 247 (LHNQGVAR) the chain is Periplasmic. Residues 248 to 268 (AVLGVVALGIICIFAKEAFAM) traverse the membrane as a helical segment. The Cytoplasmic portion of the chain corresponds to 269 to 275 (QGAARRK). The chain crosses the membrane as a helical span at residues 276–296 (MIVAFILMLQAVVFFVLYSQM). Residues 297-321 (PTSLNFFAIRNVEHSILSIAFEPEQ) are Periplasmic-facing. The helical transmembrane segment at 322 to 342 (FQALNPFWIMIGSPILAAIYN) threads the bilayer. The Cytoplasmic portion of the chain corresponds to 343–353 (KMGDRLPMPHK). A helical membrane pass occupies residues 354 to 374 (FAIGMVLCSGAFLVLPLGTKF). At 375-384 (ATDAGIVSVN) the chain is on the periplasmic side. The helical transmembrane segment at 385–405 (WLILSYALQSIGELMISGLGL) threads the bilayer. Over 406-415 (AMVAQLVPQR) the chain is Cytoplasmic. The helical transmembrane segment at 416–436 (LMGFIMGSWFLTTAGAALIAG) threads the bilayer. At 437–460 (KIANLMAVPENVTDPLVSLEVYGR) the chain is on the periplasmic side. The chain crosses the membrane as a helical span at residues 461–481 (VFMQIGIATAVIAVLMLLTAP). At 482-502 (KLNRMTLEDDKAAKATDTATA) the chain is on the cytoplasmic side.

This sequence belongs to the major facilitator superfamily. Proton-dependent oligopeptide transporter (POT/PTR) (TC 2.A.17) family. DtpA subfamily.

The protein resides in the cell inner membrane. In terms of biological role, proton-dependent permease that transports di- and tripeptides. The protein is Dipeptide and tripeptide permease A of Enterobacter sp. (strain 638).